We begin with the raw amino-acid sequence, 206 residues long: Large ribosomal subunit protein uL4 (206 aa).

Residues 42 to 93 (KKQQGTHKTKNRSEVSRTGAKMYKQKGTGRARHHSARAPQFRGGGKAHGPVV) are disordered. The segment covering 64–77 (YKQKGTGRARHHSA) has biased composition (basic residues).

The protein belongs to the universal ribosomal protein uL4 family. In terms of assembly, part of the 50S ribosomal subunit.

In terms of biological role, one of the primary rRNA binding proteins, this protein initially binds near the 5'-end of the 23S rRNA. It is important during the early stages of 50S assembly. It makes multiple contacts with different domains of the 23S rRNA in the assembled 50S subunit and ribosome. Forms part of the polypeptide exit tunnel. In Agrobacterium fabrum (strain C58 / ATCC 33970) (Agrobacterium tumefaciens (strain C58)), this protein is Large ribosomal subunit protein uL4.